A 117-amino-acid chain; its full sequence is Small ribosomal subunit protein bS6 (117 aa).

Residues 97–117 (TEEPSAILTKKDDRRGRRERN) form a disordered region.

Belongs to the bacterial ribosomal protein bS6 family.

Binds together with bS18 to 16S ribosomal RNA. The sequence is that of Small ribosomal subunit protein bS6 from Maricaulis maris (strain MCS10) (Caulobacter maris).